Reading from the N-terminus, the 130-residue chain is MLDKLLQKFRDQKKPVFHKEEGYWEISALRKWAAILIIAFGAGIIYIVPYFAFFQFKTAVANVTGVEPNRISLLLTAYGIVSLLFYIPGGWLADRISAKALFSVSMFGTGIITFWYFLVGLKGIVWITPN.

A run of 3 helical transmembrane segments spans residues Ala-34 to Phe-54, Leu-73 to Ala-93, and Phe-107 to Ile-127.

The protein localises to the cell membrane. This is an uncharacterized protein from Mycoplasma pneumoniae (strain ATCC 29342 / M129 / Subtype 1) (Mycoplasmoides pneumoniae).